Here is an 863-residue protein sequence, read N- to C-terminus: DNA replication licensing factor mcm4-B (863 aa).

The segment at 1 to 130 (MSSPTSTPSR…ARKVKQVDLH (130 aa)) is disordered. Polar residues-rich tracts occupy residues 54–64 (SPSGDVQSPSG) and 84–99 (LDLSSPLTYGTPSSRV). The C4-type zinc-finger motif lies at 306 to 331 (CQVCAFTTRVEIDRGRIAEPSVCKHC). One can recognise an MCM domain in the interval 458–667 (IYERLAAALA…YDRRLAHHLV (210 aa)). ATP-binding residues include tyrosine 471, arginine 497, lysine 516, serine 517, asparagine 618, arginine 643, arginine 732, and glutamate 735. The Arginine finger signature appears at 642–645 (SRFD).

This sequence belongs to the MCM family. Component of the mcm2-7 complex (RLF-M). The complex forms a toroidal hexameric ring with the proposed subunit order mcm2-mcm6-mcm4-mcm7-mcm3-mcm5. The heterodimer of mmcm3/mcm5 interacts with mcm4, mmcm6, mcm7 and weakly with mcm2. Begins to associate with zmcm6 at the neurula stage. Component of the CMG helicase complex, composed of the mcm2-7 complex, the GINS complex and cdc45. Hyperphosphorylated during mitosis in a mechanism requiring cdc2-cyclin B and other kinases. Undergoes dephosphorylation after exiting mitosis, existing in a partially phosphorylated state in the cytosolic interphase mcm complex which associates with the pre-replication complexes (pre-Rcs). Complete dephosphorylation inactivates the mcm complex, preventing its binding to chromatin. Becomes actively phosphorylated during S phase once the mcm complex is assembled on the chromatin. This chromatin-associated phosphorylation occurs during the activation of the pre-Rcs and is independent of cdks. Phosphorylated by the cdc7-dbf4b complex.

It localises to the nucleus. The protein localises to the chromosome. The enzyme catalyses ATP + H2O = ADP + phosphate + H(+). Functionally, acts as a component of the MCM2-7 complex (MCM complex) which is the replicative helicase essential for 'once per cell cycle' DNA replication initiation and elongation in eukaryotic cells. Core component of CDC45-MCM-GINS (CMG) helicase, the molecular machine that unwinds template DNA during replication, and around which the replisome is built. The active ATPase sites in the MCM2-7 ring are formed through the interaction surfaces of two neighboring subunits such that a critical structure of a conserved arginine finger motif is provided in trans relative to the ATP-binding site of the Walker A box of the adjacent subunit. The six ATPase active sites, however, are likely to contribute differentially to the complex helicase activity. This chain is DNA replication licensing factor mcm4-B (mcm4-b), found in Xenopus laevis (African clawed frog).